We begin with the raw amino-acid sequence, 35 residues long: Small toxic polypeptide LdrD (35 aa).

The chain crosses the membrane as a helical span at residues 10–32 (FWHDLAAPVIAGILASMIVNWLN).

The protein belongs to the Ldr toxic peptide family.

It is found in the cell inner membrane. In terms of biological role, toxic component of a type I toxin-antitoxin (TA) system. Overexpression causes rapid cell killing and nucleoid condensation of the host cell. Overexpression induces stress-response and a number of membrane protein genes. May inhibit ATP synthesis due to its insertion in the cell inner membrane. This is Small toxic polypeptide LdrD (ldrD) from Escherichia coli (strain K12).